Here is a 438-residue protein sequence, read N- to C-terminus: Enolase 1 (438 aa).

Substrate-binding residues include His-160 and Glu-169. The Proton donor role is filled by Glu-212. Asp-247, Glu-296, and Asp-321 together coordinate Mg(2+). Positions 296 and 321 each coordinate substrate. Lys-346 serves as the catalytic Proton acceptor. Residues 373–376 (SHRS) and Lys-397 each bind substrate.

Belongs to the enolase family. As to quaternary structure, homodimer. It depends on Mg(2+) as a cofactor.

The protein localises to the cytoplasm. The catalysed reaction is (2R)-2-phosphoglycerate = phosphoenolpyruvate + H2O. It participates in carbohydrate degradation; glycolysis; pyruvate from D-glyceraldehyde 3-phosphate: step 4/5. The polypeptide is Enolase 1 (ENO1) (Candida glabrata (strain ATCC 2001 / BCRC 20586 / JCM 3761 / NBRC 0622 / NRRL Y-65 / CBS 138) (Yeast)).